Reading from the N-terminus, the 802-residue chain is Fibroblast growth factor receptor 3 (802 aa).

In terms of domain architecture, Ig-like C2-type 1 spans 27–115 (PDYLMVEQPP…ILRNFTIRVT (89 aa)). Cys52 and Cys98 form a disulfide bridge. N-linked (GlcNAc...) asparagine glycosylation is found at Asn74, Asn87, and Asn109. Residues 116–148 (DLPSSGDDEDDDDDDDDETEDREPPRWTQPERM) are disordered. Over residues 121-136 (GDDEDDDDDDDDETED) the composition is skewed to acidic residues. A compositionally biased stretch (basic and acidic residues) spans 137-148 (REPPRWTQPERM). 2 Ig-like C2-type domains span residues 140–233 (PRWT…YQLD) and 242–342 (PILQ…FWLH). A disulfide bond links Cys165 and Cys217. N-linked (GlcNAc...) asparagine glycosylation is found at Asn214, Asn251, Asn283, Asn303, and Asn315. The cysteines at positions 264 and 326 are disulfide-linked. A helical membrane pass occupies residues 363-383 (ITVLIVVTSTIVFILLVIIVI). At 384–802 (THLMKVPSKK…HQQHNGAIPT (419 aa)) the chain is on the cytoplasmic side. The Protein kinase domain occupies 462 to 751 (LTLGKPLGEG…LTVTSTNEYL (290 aa)). Residues 468–476 (LGEGCFGQV) and Lys498 each bind ATP. The active-site Proton acceptor is the Asp607. Phosphotyrosine; by autocatalysis occurs at positions 637, 638, 714, and 750.

The protein belongs to the protein kinase superfamily. Tyr protein kinase family. Fibroblast growth factor receptor subfamily. Monomer. Homodimer after ligand binding. Autophosphorylated. Binding of FGF family members together with heparan sulfate proteoglycan or heparin promotes receptor dimerization and autophosphorylation on tyrosine residues. Autophosphorylation occurs in trans between the two FGFR molecules present in the dimer.

The protein resides in the cell membrane. It carries out the reaction L-tyrosyl-[protein] + ATP = O-phospho-L-tyrosyl-[protein] + ADP + H(+). Its activity is regulated as follows. Present in an inactive conformation in the absence of bound ligand. Ligand binding leads to dimerization and activation by autophosphorylation on tyrosine residues. Functionally, tyrosine-protein kinase that acts as a cell-surface receptor for fibroblast growth factors and plays an essential role in the regulation of cell proliferation, differentiation and apoptosis. Plays an essential role in the regulation of chondrocyte differentiation, proliferation and apoptosis, and is required for normal skeleton development. Regulates both osteogenesis and postnatal bone mineralization by osteoblasts. Promotes apoptosis in chondrocytes, but can also promote cancer cell proliferation. Phosphorylates PLCG1, CBL and FRS2. Ligand binding leads to the activation of several signaling cascades. Activation of PLCG1 leads to the production of the cellular signaling molecules diacylglycerol and inositol 1,4,5-trisphosphate. Phosphorylation of FRS2 triggers recruitment of GRB2, GAB1, PIK3R1 and SOS1, and mediates activation of RAS, MAPK1/ERK2, MAPK3/ERK1 and the MAP kinase signaling pathway, as well as of the AKT1 signaling pathway. This Xenopus laevis (African clawed frog) protein is Fibroblast growth factor receptor 3 (fgfr3).